The chain runs to 399 residues: Glutathione S-transferase LANCL1 (399 aa).

The residue at position 2 (alanine 2) is an N-acetylalanine. Lysine 142 carries the N6-acetyllysine modification. Residue cysteine 276 coordinates Zn(2+). Lysine 317 is a glutathione binding site. The Zn(2+) site is built by cysteine 322 and histidine 323. Residue 364–367 participates in glutathione binding; it reads RTPD.

The protein belongs to the LanC-like protein family. Interacts with the C-terminal of STOM. Interacts with the EPS8 SH3 domain. Interaction with EPS8 is inhibited by glutathione binding. Strongly expressed in the brain, testis and skeletal muscle. Expressed in the neurons of the cerebellum, the germinal cells of the seminiferous tubules in testis, in liver hepoatocytes and in cardiac myocytes.

It localises to the cytoplasm. The protein localises to the cell membrane. The enzyme catalyses RX + glutathione = an S-substituted glutathione + a halide anion + H(+). It catalyses the reaction 1-chloro-2,4-dinitrobenzene + glutathione = 2,4-dinitrophenyl-S-glutathione + chloride + H(+). Its function is as follows. Functions as a glutathione transferase. Catalyzes conjugation of the glutathione (GSH) to artificial substrates 1-chloro-2,4-dinitrobenzene (CDNB) and p-nitrophenyl acetate. Mitigates neuronal oxidative stress during normal postnatal development and in response to oxidative stresses probably through GSH antioxidant defense mechanism. May play a role in EPS8 signaling. Binds glutathione. The protein is Glutathione S-transferase LANCL1 of Rattus norvegicus (Rat).